Reading from the N-terminus, the 568-residue chain is Tetratricopeptide repeat protein 22 (568 aa).

7 TPR repeats span residues 66 to 99, 101 to 133, 155 to 190, 203 to 237, 260 to 294, 296 to 328, and 432 to 465; these read PAVR…DPGN, NAWA…MGLE, YAHG…GQQI, ATLF…LGEV, KDTF…AKNQ, PILN…LTDP, and PELQ…DDEG.

The protein is Tetratricopeptide repeat protein 22 (Ttc22) of Mus musculus (Mouse).